We begin with the raw amino-acid sequence, 663 residues long: MKPRLIFQYFAYSFLVFLPFINTLPCSYQNPRIEDVLLEVPIEHHHPHRHRRDSENPTETPPDLQKFAPLRIQLHYDKSIQNLTAEVQHFVNTTLLPEAVGYWENALRVRPMKTPIRLRRKCISSFYYYKQGMRNVACDKGCRERTTCGEADIPNDHLLDCLACNNTDDCQTTGEMGEGVKESDFILYVTAHNSKRCEGPETLSYAAHCQQEADFDRPIAGNVNLCPSALSVHNHDYEILTSTVKHEILHALGFSVGLYAFFRDKDGKPRTKRNRYGRPTSLNKQRGYYDWDKNTITTVLREEWWTGEGKVIHPIQMMVTPKVREEARRHFGCDKLEGAELENQGGEGTVLTHWEKRAYENEAMTGTHTQNPVYSRLTLAFLEDTGWYQPNYEVAEDLHWGKQLGCDFAMKSCGEWIHQKRILGEDAYPYCSDIKHDGTKSMAITRCTSQRDSLALCNLIPFQKELPPQYRNFMSLPGVNPDGAKYYGGSVEMADYCPFLQEFEWKMPEKEHKDSRCELEGNGKEGEDILEVYGENSKCFEFPKPWTERKCGRIRVLSHYMAGCYEYQCTNGTLYVGSYNATDMYPCYAENQKVHIKKVVDGWLREGSLICPKCSDYCSSCGPPIVIPDYIGDPELDEPCFAFSKFSVFGLFSCYLAILYIRF.

H246 is a binding site for Zn(2+). The active site involves E247. Zn(2+) is bound by residues H250 and H353.

The protein belongs to the peptidase M8 family. It depends on Zn(2+) as a cofactor.

The protein resides in the cytoplasm. Functionally, metalloprotease. The polypeptide is Leishmanolysin-like peptidase (Caenorhabditis briggsae).